The primary structure comprises 130 residues: Translation initiation factor 5A (130 aa).

Lys36 carries the post-translational modification Hypusine.

Belongs to the eIF-5A family.

The protein localises to the cytoplasm. Functionally, functions by promoting the formation of the first peptide bond. In Methanothermobacter thermautotrophicus (strain ATCC 29096 / DSM 1053 / JCM 10044 / NBRC 100330 / Delta H) (Methanobacterium thermoautotrophicum), this protein is Translation initiation factor 5A (eif5a).